The primary structure comprises 204 residues: Octanoyltransferase (204 aa).

Residues 30–204 form the BPL/LPL catalytic domain; it reads CETPDEIWLL…QSFINQLTDV (175 aa). Substrate is bound by residues 69-76, 136-138, and 149-151; these read RGGQITYH, SLG, and GIA. The active-site Acyl-thioester intermediate is cysteine 167.

Belongs to the LipB family.

Its subcellular location is the cytoplasm. The enzyme catalyses octanoyl-[ACP] + L-lysyl-[protein] = N(6)-octanoyl-L-lysyl-[protein] + holo-[ACP] + H(+). It participates in protein modification; protein lipoylation via endogenous pathway; protein N(6)-(lipoyl)lysine from octanoyl-[acyl-carrier-protein]: step 1/2. In terms of biological role, catalyzes the transfer of endogenously produced octanoic acid from octanoyl-acyl-carrier-protein onto the lipoyl domains of lipoate-dependent enzymes. Lipoyl-ACP can also act as a substrate although octanoyl-ACP is likely to be the physiological substrate. This chain is Octanoyltransferase, found in Nitrosomonas europaea (strain ATCC 19718 / CIP 103999 / KCTC 2705 / NBRC 14298).